The chain runs to 307 residues: Atrochrysone carboxyl ACP thioesterase (307 aa).

Positions 104, 106, 108, and 109 each coordinate Zn(2+). Residue Asp108 is the Proton donor/acceptor of the active site.

Belongs to the metallo-beta-lactamase superfamily. Zn(2+) serves as cofactor.

The enzyme catalyses atrochrysone carboxyl-[ACP] + H2O = atrochrysone carboxylate + holo-[ACP] + H(+). The protein operates within secondary metabolite biosynthesis. Its function is as follows. Atrochrysone carboxyl ACP thioesterase; part of the gene cluster that mediates the biosynthesis of monodictyphenone, a prenyl xanthone derivative. The pathway begins with the synthesis of atrochrysone thioester by the polyketide synthase (PKS) mdpG. The atrochrysone carboxyl ACP thioesterase mdpF then breaks the thioester bond and releases the atrochrysone carboxylic acid from mdpG. The atrochrysone carboxylic acid is then converted to atrochrysone which is further transformed into emodin anthrone. The next step is performed by the anthrone oxygenase mdpH that catalyzes the oxidation of emodinanthrone to emodin. Emodin is further modified to yield monodictyphenone via several steps involving mdpB, mdpC mdpJ, mdpK and mdpL. The short chain dehydrogenase mdpC converts the tautomers of emodin hydroquinone into the 3-hydroxy-3,4-dihydroan-thracen-1(2H)-one derivative. These enzymes with xptA, xptB and xptC are also proposed to be involved in the synthesis of shamixanthone from emodin. Especially, direct reduction of emodin by the short chain dehydrogenase mdpC followed by dehydration catalyzed by the scytalone dehydratase-like protein mdpB gives loss of oxygen and formation of chrysophanol intermediate in two simple steps. This is Atrochrysone carboxyl ACP thioesterase from Emericella nidulans (strain FGSC A4 / ATCC 38163 / CBS 112.46 / NRRL 194 / M139) (Aspergillus nidulans).